The sequence spans 273 residues: Bidirectional sugar transporter SWEET1a (273 aa).

The Extracellular segment spans residues 1 to 6 (MEHIAR). The helical transmembrane segment at 7–27 (FFFGVSGNVIALFLFLSPVVT) threads the bilayer. The MtN3/slv 1 domain occupies 7 to 95 (FFFGVSGNVI…VIFLIFAERK (89 aa)). The Cytoplasmic portion of the chain corresponds to 28 to 42 (FWRIIKKRSTEDFSG). A helical transmembrane segment spans residues 43 to 63 (VPYNMTLLNCLLSAWYGLPFV). At 64-71 (SPNNILVT) the chain is on the extracellular side. Residues 72–92 (TINGTGSVIEAIYVVIFLIFA) form a helical membrane-spanning segment. Residues 93–101 (ERKARLKMM) are Cytoplasmic-facing. The chain crosses the membrane as a helical span at residues 102–122 (GLLGLVTSIFTMVVLVSLLAL). Residues 123–128 (HGQGRK) lie on the Extracellular side of the membrane. Residues 129–149 (LFCGLAATIFSICMYASPLSI) form a helical membrane-spanning segment. The region spanning 131–214 (CGLAATIFSI…ILYAIYRNHK (84 aa)) is the MtN3/slv 2 domain. The Cytoplasmic segment spans residues 150-163 (MRLVIKTKSVEFMP). The chain crosses the membrane as a helical span at residues 164-184 (FLLSLSVFLCGTSWFIYGLLG). At 185–188 (RDPF) the chain is on the extracellular side. Residues 189 to 209 (IAIPNGCGSFLGLMQLILYAI) form a helical membrane-spanning segment. The Cytoplasmic portion of the chain corresponds to 210-273 (YRNHKGATPA…SADDKVASQV (64 aa)).

Belongs to the SWEET sugar transporter family. Forms homooligomers and/or heterooligomers.

It localises to the cell membrane. Mediates both low-affinity uptake and efflux of sugar across the plasma membrane. This Oryza sativa subsp. japonica (Rice) protein is Bidirectional sugar transporter SWEET1a (SWEET1A).